A 177-amino-acid chain; its full sequence is Nucleoside triphosphate/diphosphate phosphatase (177 aa).

Arg23 acts as the Proton donor in catalysis. Mg(2+)-binding residues include Asn87, Asp103, Asp105, Asp107, Asp120, and Glu123.

Belongs to the Ntdp family. The cofactor is Mg(2+).

The enzyme catalyses a ribonucleoside 5'-triphosphate + H2O = a ribonucleoside 5'-diphosphate + phosphate + H(+). It carries out the reaction a ribonucleoside 5'-diphosphate + H2O = a ribonucleoside 5'-phosphate + phosphate + H(+). Has nucleoside phosphatase activity towards nucleoside triphosphates and nucleoside diphosphates. The protein is Nucleoside triphosphate/diphosphate phosphatase of Streptococcus uberis (strain ATCC BAA-854 / 0140J).